Here is a 115-residue protein sequence, read N- to C-terminus: Large ribosomal subunit protein bL20 (115 aa).

It belongs to the bacterial ribosomal protein bL20 family.

Its function is as follows. Binds directly to 23S ribosomal RNA and is necessary for the in vitro assembly process of the 50S ribosomal subunit. It is not involved in the protein synthesizing functions of that subunit. This is Large ribosomal subunit protein bL20 from Synechococcus sp. (strain CC9902).